Here is a 206-residue protein sequence, read N- to C-terminus: FMN-dependent NADH:quinone oxidoreductase (206 aa).

FMN-binding positions include serine 10, 16–18 (SSS), 93–96 (MYNF), and 137–140 (TRGG).

It belongs to the azoreductase type 1 family. Homodimer. FMN serves as cofactor.

The catalysed reaction is 2 a quinone + NADH + H(+) = 2 a 1,4-benzosemiquinone + NAD(+). It catalyses the reaction N,N-dimethyl-1,4-phenylenediamine + anthranilate + 2 NAD(+) = 2-(4-dimethylaminophenyl)diazenylbenzoate + 2 NADH + 2 H(+). Quinone reductase that provides resistance to thiol-specific stress caused by electrophilic quinones. In terms of biological role, also exhibits azoreductase activity. Catalyzes the reductive cleavage of the azo bond in aromatic azo compounds to the corresponding amines. This is FMN-dependent NADH:quinone oxidoreductase from Psychromonas ingrahamii (strain DSM 17664 / CCUG 51855 / 37).